A 459-amino-acid chain; its full sequence is Ribulose bisphosphate carboxylase large chain (459 aa).

An N6,N6,N6-trimethyllysine modification is found at lysine 4. Asparagine 113 and threonine 163 together coordinate substrate. The active-site Proton acceptor is the lysine 165. Residue lysine 167 participates in substrate binding. Residues lysine 191, aspartate 193, and glutamate 194 each contribute to the Mg(2+) site. Position 191 is an N6-carboxylysine (lysine 191). Residue histidine 284 is the Proton acceptor of the active site. Substrate is bound by residues arginine 285, histidine 317, and serine 369.

Belongs to the RuBisCO large chain family. Type I subfamily. As to quaternary structure, heterohexadecamer of 8 large chains and 8 small chains; disulfide-linked. The disulfide link is formed within the large subunit homodimers. It depends on Mg(2+) as a cofactor. Post-translationally, the disulfide bond which can form in the large chain dimeric partners within the hexadecamer appears to be associated with oxidative stress and protein turnover.

The protein resides in the plastid. The protein localises to the chloroplast. The enzyme catalyses 2 (2R)-3-phosphoglycerate + 2 H(+) = D-ribulose 1,5-bisphosphate + CO2 + H2O. It carries out the reaction D-ribulose 1,5-bisphosphate + O2 = 2-phosphoglycolate + (2R)-3-phosphoglycerate + 2 H(+). Its function is as follows. RuBisCO catalyzes two reactions: the carboxylation of D-ribulose 1,5-bisphosphate, the primary event in carbon dioxide fixation, as well as the oxidative fragmentation of the pentose substrate in the photorespiration process. Both reactions occur simultaneously and in competition at the same active site. The chain is Ribulose bisphosphate carboxylase large chain from Geum quellyon (Chilean avens).